The following is a 209-amino-acid chain: Thiamine-phosphate synthase (209 aa).

Residues 36-40 and Asn-68 contribute to the 4-amino-2-methyl-5-(diphosphooxymethyl)pyrimidine site; that span reads QYRDK. Mg(2+) contacts are provided by Asp-69 and Asp-87. Thr-106 serves as a coordination point for 4-amino-2-methyl-5-(diphosphooxymethyl)pyrimidine. 133–135 provides a ligand contact to 2-[(2R,5Z)-2-carboxy-4-methylthiazol-5(2H)-ylidene]ethyl phosphate; it reads SST. 4-amino-2-methyl-5-(diphosphooxymethyl)pyrimidine is bound at residue Lys-136. Residue Gly-163 coordinates 2-[(2R,5Z)-2-carboxy-4-methylthiazol-5(2H)-ylidene]ethyl phosphate.

It belongs to the thiamine-phosphate synthase family. Requires Mg(2+) as cofactor.

It catalyses the reaction 2-[(2R,5Z)-2-carboxy-4-methylthiazol-5(2H)-ylidene]ethyl phosphate + 4-amino-2-methyl-5-(diphosphooxymethyl)pyrimidine + 2 H(+) = thiamine phosphate + CO2 + diphosphate. It carries out the reaction 2-(2-carboxy-4-methylthiazol-5-yl)ethyl phosphate + 4-amino-2-methyl-5-(diphosphooxymethyl)pyrimidine + 2 H(+) = thiamine phosphate + CO2 + diphosphate. The enzyme catalyses 4-methyl-5-(2-phosphooxyethyl)-thiazole + 4-amino-2-methyl-5-(diphosphooxymethyl)pyrimidine + H(+) = thiamine phosphate + diphosphate. Its pathway is cofactor biosynthesis; thiamine diphosphate biosynthesis; thiamine phosphate from 4-amino-2-methyl-5-diphosphomethylpyrimidine and 4-methyl-5-(2-phosphoethyl)-thiazole: step 1/1. Functionally, condenses 4-methyl-5-(beta-hydroxyethyl)thiazole monophosphate (THZ-P) and 2-methyl-4-amino-5-hydroxymethyl pyrimidine pyrophosphate (HMP-PP) to form thiamine monophosphate (TMP). This is Thiamine-phosphate synthase from Azotobacter vinelandii (strain DJ / ATCC BAA-1303).